Here is a 203-residue protein sequence, read N- to C-terminus: MSGTLYIVSAPSGAGKTSLVKALLDAAPEVRVSVSHTTRGMRPGEVDGVNYHFTSREEFLAMLERNEFLEHAEVFGNLYGTSQRWVEKTLAEGLDLILEIDWQGAQQVRRLMPEAQSIFILPPSQEALRQRLTNRGQDSDEVIERRMREAVSEMSHYVEYDHLVINDDFAHALDDLKAIFRARQLRQDAQQQRHAELLGRLLA.

Positions 3-181 (GTLYIVSAPS…ALDDLKAIFR (179 aa)) constitute a Guanylate kinase-like domain. Residue 10-17 (APSGAGKT) coordinates ATP.

The protein belongs to the guanylate kinase family.

The protein localises to the cytoplasm. It carries out the reaction GMP + ATP = GDP + ADP. Essential for recycling GMP and indirectly, cGMP. This chain is Guanylate kinase (gmk), found in Pseudomonas aeruginosa (strain ATCC 15692 / DSM 22644 / CIP 104116 / JCM 14847 / LMG 12228 / 1C / PRS 101 / PAO1).